Reading from the N-terminus, the 326-residue chain is Putative ribose-phosphate pyrophosphokinase 2 (326 aa).

ATP-binding positions include 43–45 (DGE) and 102–103 (RQ). H136 contacts Mg(2+). Residues D226 and 230–234 (NTGKT) contribute to the D-ribose 5-phosphate site.

It belongs to the ribose-phosphate pyrophosphokinase family. Class I subfamily. In terms of assembly, homohexamer. Mg(2+) is required as a cofactor.

The protein resides in the cytoplasm. The catalysed reaction is D-ribose 5-phosphate + ATP = 5-phospho-alpha-D-ribose 1-diphosphate + AMP + H(+). Its pathway is metabolic intermediate biosynthesis; 5-phospho-alpha-D-ribose 1-diphosphate biosynthesis; 5-phospho-alpha-D-ribose 1-diphosphate from D-ribose 5-phosphate (route I): step 1/1. In terms of biological role, involved in the biosynthesis of the central metabolite phospho-alpha-D-ribosyl-1-pyrophosphate (PRPP) via the transfer of pyrophosphoryl group from ATP to 1-hydroxyl of ribose-5-phosphate (Rib-5-P). The sequence is that of Putative ribose-phosphate pyrophosphokinase 2 from Streptococcus mutans serotype c (strain ATCC 700610 / UA159).